A 449-amino-acid chain; its full sequence is UDP-glycosyltransferase 76E6 (449 aa).

Residues serine 274, 333-335, 350-358, and 372-375 each bind UDP-alpha-D-glucose; these read APQ, HCGWNSTLE, and HGEQ.

This sequence belongs to the UDP-glycosyltransferase family.

This chain is UDP-glycosyltransferase 76E6 (UGT76E6), found in Arabidopsis thaliana (Mouse-ear cress).